The primary structure comprises 641 residues: Chaperone protein DnaK (641 aa).

Position 198 is a phosphothreonine; by autocatalysis (Thr-198). 3 stretches are compositionally biased toward basic and acidic residues: residues 514 to 529, 540 to 554, and 608 to 621; these read AEANAEADKKRREGVE, SSEKSLQEHGDKVSE, and AHADAAADAKRSGD. Disordered regions lie at residues 514-554 and 604-641; these read AEAN…KVSE and QTESAHADAAADAKRSGDDVVDADYEEVKDEDDRKRSA. Residues 622-633 are compositionally biased toward acidic residues; it reads DVVDADYEEVKD.

The protein belongs to the heat shock protein 70 family.

In terms of biological role, acts as a chaperone. This is Chaperone protein DnaK from Sinorhizobium medicae (strain WSM419) (Ensifer medicae).